Reading from the N-terminus, the 525-residue chain is Asparagine synthetase [glutamine-hydrolyzing] (525 aa).

Cysteine 2 (for GATase activity) is an active-site residue. The 184-residue stretch at 2 to 185 folds into the Glutamine amidotransferase type-2 domain; the sequence is CGILAVLGCS…PGHLYSSKEG (184 aa). L-glutamine-binding positions include 50–54, 75–77, and aspartate 98; these read RLAII and NGE. An Asparagine synthetase domain is found at 193 to 517; it reads PPWFSEVIPS…QIDSPWRSKC (325 aa). Residues leucine 231, valine 267, and 341–342 contribute to the ATP site; that span reads SG.

The catalysed reaction is L-aspartate + L-glutamine + ATP + H2O = L-asparagine + L-glutamate + AMP + diphosphate + H(+). It functions in the pathway amino-acid biosynthesis; L-asparagine biosynthesis; L-asparagine from L-aspartate (L-Gln route): step 1/1. Functionally, could play a role in remobilization of nitrogen in flowers during senescence. The protein is Asparagine synthetase [glutamine-hydrolyzing] (AND1) of Sandersonia aurantiaca (Christmas-bells).